A 465-amino-acid polypeptide reads, in one-letter code: Gamma-aminobutyric acid receptor subunit rho-2 (465 aa).

The N-terminal stretch at 1–20 (MPYFMRLALFLFCLMALVES) is a signal peptide. Topologically, residues 21–260 (RKPRRKRWTG…LYINFTLRRH (240 aa)) are extracellular. Arg-105 is a binding site for 4-aminobutanoate. N-linked (GlcNAc...) asparagine glycosylation occurs at Asn-120. A 4-aminobutanoate-binding site is contributed by Ser-169. Residues Cys-178 and Cys-192 are joined by a disulfide bond. Glu-197 serves as a coordination point for 4-aminobutanoate. The N-linked (GlcNAc...) asparagine glycan is linked to Asn-254. A helical transmembrane segment spans residues 261 to 281 (IFFFLLQTYFPATLMVMLSWV). Residues 282 to 293 (SFWIDHRAVPAR) are Cytoplasmic-facing. A helical membrane pass occupies residues 294–314 (VSLGIMTVLTMSTIITGVNAS). At 315–325 (MPRVSYIRAVD) the chain is on the extracellular side. A helical transmembrane segment spans residues 326 to 346 (IYLWVSFVFVFLSVLEYAAVN). Over 347 to 443 (YLTTVQEQKE…IFQNTHAIDK (97 aa)) the chain is Cytoplasmic. The helical transmembrane segment at 444-464 (YSRLIFPAFYIVFNLIYWSVF) threads the bilayer. Residue Ser-465 is a topological domain, extracellular.

It belongs to the ligand-gated ion channel (TC 1.A.9) family. Gamma-aminobutyric acid receptor (TC 1.A.9.5) subfamily. GABRR2 sub-subfamily. In terms of assembly, three rho subunits (rho-1/GBRR1, rho-2/GBRR2 and rho-3/GBRR3) coassemble either to form functional homopentamers or heteropentamers. Rho-2 is unable to form a functional homopentamer. Interacts with SQSTM1. In terms of tissue distribution, expressed in spinal cord and in cerebellum. Expressed in retina.

Its subcellular location is the postsynaptic cell membrane. The protein localises to the cell membrane. The enzyme catalyses chloride(in) = chloride(out). In contrast with rho-1 and rho-3 homopentamers, rho-2 GABAARs are not inhibited by picrotoxin. Rho subunit of the pentameric ligand-gated chloride channels responsible for mediating the effects of gamma-aminobutyric acid (GABA), the major inhibitory neurotransmitter in the brain. Rho-containing GABA-gated chloride channels are a subclass of GABA(A) receptors (GABAARs) entirely composed of rho subunits, where GABA molecules bind at the rho intersubunit interfaces. When activated by GABA, rho-GABAARs selectively allow the flow of chloride anions across the cell membrane down their electrochemical gradient. Rho-2 GABAARs may contribute to the regulation of glial development in the cerebellum by controlling extrasynaptic transmission. Rho-2 GABAARs are also involved in neuronal tonic (extrasynaptic) and phasic (synaptic) transmission in the Purkinje neurons of the cerebellum. Rho-2 GABAARs expressed in retina may play a role in retinal neurotransmission. This chain is Gamma-aminobutyric acid receptor subunit rho-2, found in Rattus norvegicus (Rat).